Reading from the N-terminus, the 296-residue chain is Probable endonuclease 4 (296 aa).

Zn(2+) is bound by residues histidine 68, histidine 109, glutamate 144, aspartate 178, histidine 181, histidine 213, aspartate 226, histidine 228, and glutamate 258.

It belongs to the AP endonuclease 2 family. Zn(2+) serves as cofactor.

It carries out the reaction Endonucleolytic cleavage to 5'-phosphooligonucleotide end-products.. Endonuclease IV plays a role in DNA repair. It cleaves phosphodiester bonds at apurinic or apyrimidinic (AP) sites, generating a 3'-hydroxyl group and a 5'-terminal sugar phosphate. This chain is Probable endonuclease 4, found in Pediococcus pentosaceus (strain ATCC 25745 / CCUG 21536 / LMG 10740 / 183-1w).